We begin with the raw amino-acid sequence, 885 residues long: DNA mismatch repair protein MutS (885 aa).

The disordered stretch occupies residues 1-67 (MAPGEQQLSL…SNNDDEGLPR (67 aa)). Residues 26–36 (SEDKTEESERP) show a composition bias toward basic and acidic residues. Residue 691 to 698 (GPNASGKS) coordinates ATP.

It belongs to the DNA mismatch repair MutS family.

This protein is involved in the repair of mismatches in DNA. It is possible that it carries out the mismatch recognition step. This protein has a weak ATPase activity. In Synechococcus sp. (strain RCC307), this protein is DNA mismatch repair protein MutS.